Consider the following 506-residue polypeptide: Sugar transport protein 5 (506 aa).

Topologically, residues 1-19 (MAGGGLALDVSSAGNIDAK) are cytoplasmic. Transmembrane regions (helical) follow at residues 20-40 (ITAAVVMSCIVAASCGLIFGY), 81-101 (LLTAFTSSLYVAGLVASLVAS), 117-137 (GFTFLFGALINGLAANIAMLI), 141-161 (ILLGFGVGFTNQAAPVYLSEV), 168-188 (GAFNIGFSCFISMGVVAANLI), 201-221 (ISLGLAAVPAAIMTVGCLFIS), 287-307 (LVVAVVIPCFQQLTGITVNAF), 325-345 (IATFILGFVNLGSLLLSTMVI), 352-372 (FLFIAGGILMLLCQIAVAVLL), 390-410 (VTVVVLLCIYAAGFGWSWGPL), 430-450 (LSVAVNFAATFALSQTFLATL), and 456-476 (GAFLFYGGWIFTMTIFVIMFL). Residues 477-506 (PETKGIPVDSMYQVWEKHWYWQRFTKPTST) are Cytoplasmic-facing.

It belongs to the major facilitator superfamily. Sugar transporter (TC 2.A.1.1) family.

The protein localises to the membrane. Its function is as follows. Mediates an active uptake of hexoses, probably by sugar/hydrogen symport. The polypeptide is Sugar transport protein 5 (STP5) (Arabidopsis thaliana (Mouse-ear cress)).